An 89-amino-acid chain; its full sequence is Small ribosomal subunit protein uS15 (89 aa).

It belongs to the universal ribosomal protein uS15 family. Part of the 30S ribosomal subunit. Forms a bridge to the 50S subunit in the 70S ribosome, contacting the 23S rRNA.

One of the primary rRNA binding proteins, it binds directly to 16S rRNA where it helps nucleate assembly of the platform of the 30S subunit by binding and bridging several RNA helices of the 16S rRNA. In terms of biological role, forms an intersubunit bridge (bridge B4) with the 23S rRNA of the 50S subunit in the ribosome. In Buchnera aphidicola subsp. Schizaphis graminum (strain Sg), this protein is Small ribosomal subunit protein uS15.